The primary structure comprises 1164 residues: Auxin response factor 7 (1164 aa).

The TF-B3 DNA-binding region spans 127–229 (FCKTLTASDT…QLLLGIRRAN (103 aa)). Disordered regions lie at residues 451 to 505 (HNNL…QQQL), 536 to 555 (QQLQ…QQQQ), 570 to 728 (HQQP…LLQQ), 765 to 858 (FLSP…SSSG), and 903 to 930 (KSKA…GENN). Positions 464–489 (LSFQTPHGGISSSNLQFNKQNQQAPM) are enriched in polar residues. Residues 570–635 (HQQPLQQQTQ…SQQASTHHLQ (66 aa)) are compositionally biased toward low complexity. The segment covering 637 to 651 (QLVSGSMASSVITPP) has biased composition (polar residues). A compositionally biased stretch (low complexity) spans 652–671 (SSSLNQSFQQQQQQSKQLQQ). A compositionally biased stretch (polar residues) spans 678–710 (ASTSQSSVIETSKSSSNLMSAPPQETQFSRQVE). Low complexity-rich tracts occupy residues 711 to 728 (QQQP…LLQQ) and 765 to 790 (FLSP…TLSQ). Over residues 791-808 (GHQFPSSCTNNGLSTLQP) the composition is skewed to polar residues. Residues 841–851 (PSSSTSPSTNN) show a composition bias toward low complexity. Positions 903–921 (KSKASLTDHQLEASASGTS) are enriched in polar residues. The 94-residue stretch at 1037–1130 (RTYTKVQKRG…EVQQMSLDGN (94 aa)) folds into the PB1 domain. The interval 1145–1164 (DSGNAWRGHYDDNSATSFNR) is disordered.

The protein belongs to the ARF family. Homodimers and heterodimers. Interacts with the auxin-responsive proteins IAA1 and IAA12 (BODENLOS). Interacts (via PB1 domain) with IAA17 (via PB1 domain). Interacts with IAA19. Interacts with ARF5. Binds to JMJ30. Binds to ATXR2 in the nucleus. In terms of tissue distribution, expressed in the whole plant.

It is found in the nucleus. Auxin response factors (ARFs) are transcriptional factors that bind specifically to the DNA sequence 5'-TGTCTC-3' found in the auxin-responsive promoter elements (AuxREs). Acts as a transcriptional activator of several tropic stimulus-induced (TSI) genes, including SAUR50. Formation of heterodimers with Aux/IAA proteins may alter their ability to modulate early auxin response genes expression. Required for differential growth responses of aerial tissues. Involved in ethylene responses. Regulates lateral root formation through direct regulation of LBD16 and/or LBD29. Functionally redundant with ARF19. Mediates embryo axis formation and vascular tissues differentiation. Functionally redundant with ARF5. Involved in cellular dedifferentiation during callus formation on callus-inducing medium (CIM) and in an ATXR2-dependent manner. The protein is Auxin response factor 7 of Arabidopsis thaliana (Mouse-ear cress).